The primary structure comprises 112 residues: UPF0060 membrane protein CMS0846 (112 aa).

Helical transmembrane passes span 6–26, 32–52, 61–81, and 87–107; these read VILFALAAVAEIGGAWLIWQA, PFWWAGLGVMALGAYGFIATL, ILAAYGGVFVAGSLLWGTVVD, and RWDVIGAVVCLVGVAVIMAAP.

The protein belongs to the UPF0060 family.

It is found in the cell membrane. This chain is UPF0060 membrane protein CMS0846, found in Clavibacter sepedonicus (Clavibacter michiganensis subsp. sepedonicus).